The chain runs to 219 residues: Probable GTP-binding protein EngB (219 aa).

Residues 40–212 (LLPEIAFIGK…KASLAKCIIK (173 aa)) enclose the EngB-type G domain. Residues 48-55 (GKSNVGKS), 75-79 (GRTGQ), 93-96 (DLPG), 160-163 (TKFD), and 191-193 (VSS) contribute to the GTP site. Residues S55 and T77 each coordinate Mg(2+).

It belongs to the TRAFAC class TrmE-Era-EngA-EngB-Septin-like GTPase superfamily. EngB GTPase family. Requires Mg(2+) as cofactor.

In terms of biological role, necessary for normal cell division and for the maintenance of normal septation. The chain is Probable GTP-binding protein EngB from Rickettsia canadensis (strain McKiel).